The primary structure comprises 462 residues: uncharacterized protein (462 aa).

The interval 1-108 (MEDSNTNKDI…NGQDDQDEMD (108 aa)) is disordered. Over residues 36-51 (TVERILERKQKERESK) the composition is skewed to basic and acidic residues. Over residues 64–95 (SSPSSLLSSPISSNDNNNNNNNNNNESFDINN) the composition is skewed to low complexity. Positions 119–150 (LLKRKAALAAKKKESLAEQMKKYNQQYDSIIS) form a coiled coil. The interval 188–208 (SKLQSLNNNTSPSTSSSNLID) is disordered. Residues 190–208 (LQSLNNNTSPSTSSSNLID) show a composition bias toward low complexity.

This is an uncharacterized protein from Dictyostelium discoideum (Social amoeba).